We begin with the raw amino-acid sequence, 202 residues long: Small ribosomal subunit protein uS4 (202 aa).

One can recognise an S4 RNA-binding domain in the interval 94-157; sequence SRLDSLVYRA…LEMPLIKNTL (64 aa).

This sequence belongs to the universal ribosomal protein uS4 family. In terms of assembly, part of the 30S ribosomal subunit. Contacts protein S5. The interaction surface between S4 and S5 is involved in control of translational fidelity.

In terms of biological role, one of the primary rRNA binding proteins, it binds directly to 16S rRNA where it nucleates assembly of the body of the 30S subunit. With S5 and S12 plays an important role in translational accuracy. The chain is Small ribosomal subunit protein uS4 from Ureaplasma urealyticum serovar 10 (strain ATCC 33699 / Western).